Here is a 399-residue protein sequence, read N- to C-terminus: S-adenosylmethionine synthase (399 aa).

Position 17 (His-17) interacts with ATP. A Mg(2+)-binding site is contributed by Asp-19. Position 45 (Glu-45) interacts with K(+). L-methionine contacts are provided by Glu-58 and Gln-101. The flexible loop stretch occupies residues 101-111; the sequence is QSADIAMGVDQ. Residues 177-179, 244-245, Asp-253, 259-260, Ala-276, and Lys-280 each bind ATP; these read DGK, RF, and RK. Residue Asp-253 participates in L-methionine binding. Lys-284 contacts L-methionine.

This sequence belongs to the AdoMet synthase family. Homotetramer; dimer of dimers. Mg(2+) is required as a cofactor. It depends on K(+) as a cofactor.

The protein resides in the cytoplasm. It catalyses the reaction L-methionine + ATP + H2O = S-adenosyl-L-methionine + phosphate + diphosphate. It participates in amino-acid biosynthesis; S-adenosyl-L-methionine biosynthesis; S-adenosyl-L-methionine from L-methionine: step 1/1. In terms of biological role, catalyzes the formation of S-adenosylmethionine (AdoMet) from methionine and ATP. The overall synthetic reaction is composed of two sequential steps, AdoMet formation and the subsequent tripolyphosphate hydrolysis which occurs prior to release of AdoMet from the enzyme. This chain is S-adenosylmethionine synthase, found in Bacillus mycoides (strain KBAB4) (Bacillus weihenstephanensis).